Reading from the N-terminus, the 130-residue chain is Glycoprotein hormone beta-5 (130 aa).

The first 24 residues, 1-24, serve as a signal peptide directing secretion; sequence MKLAFLFLGPMALLLLAGYGCVLG. Disulfide bonds link Cys36/Cys84, Cys50/Cys99, Cys60/Cys115, Cys64/Cys117, and Cys120/Cys127. N-linked (GlcNAc...) asparagine glycosylation is present at Asn87.

The protein belongs to the glycoprotein hormones subunit beta family. Heterodimer with GPHA2; this heterodimer interacts with thyroid-stimulating hormone receptor (TSHR), and hence stimulates cAMP production. In terms of processing, N-glycosylated. As to expression, highly expressed in brain and at low levels in pituitary. Also found in retina, testis and skin but not in pancreas, parotid, kidney, stomach, liver, colon, small intestine, thyroid, brain or adrenal gland. In pituitary, colocalizes with ACTH, suggesting that it is located in corticotrophs.

The protein resides in the secreted. Functionally, functions as a heterodimeric glycoprotein hormone with GPHA2 able to bind and activate the thyroid-stimulating hormone receptor (TSHR), leading to increased cAMP production. Plays a central role in controlling thyroid cell metabolism. The polypeptide is Glycoprotein hormone beta-5 (GPHB5) (Homo sapiens (Human)).